The chain runs to 89 residues: Myrmicitoxin(1)-Pm2a (89 aa).

A signal peptide spans 1-22 (MEIPKLLYIAVIAIGLSGSLTC). Residues 23-61 (ATPLANPWGDPEAEANPEAKATAEATAEAIAEALAEPEP) constitute a propeptide that is removed on maturation. An Asparagine amide modification is found at Asn-88.

The protein belongs to the formicidae venom clade 1 family. As to expression, expressed by the venom gland.

The protein resides in the secreted. Toxin that potently modulates mammalian voltage-gated sodium (Nav) channels, reducing the voltage threshold for activation and inhibiting channel inactivation. Shows activity on hNav1.6/SCN8A (EC(50)=176 nM), mNav1.7/SCN9A (EC(50)=102 nM) and hNav1.7 (EC(50)=154 nM). In vivo, causes spontaneous, gradual and long-lasting nocifensive behaviors by intraplantar injection in mice, as well as pronounced swelling of the injected paw. Does not have effect on insects (blowflies). The protein is Myrmicitoxin(1)-Pm2a of Pogonomyrmex maricopa (Maricopa harvester ant).